Here is a 125-residue protein sequence, read N- to C-terminus: MKDVIYVALGGAVGSVLRYWVGIVTIRLFGPFLPWGTFSVNLIGSFCIGLFAEMIARKFDASADLRMLLITGLLGGFTTFSAFMLDTVSLAERGDLLWPAFYVAASIGFGVGAVFAGLAVGRWLF.

Transmembrane regions (helical) follow at residues 4–24, 32–52, 68–88, and 100–120; these read VIYVALGGAVGSVLRYWVGIV, FLPWGTFSVNLIGSFCIGLFA, LLITGLLGGFTTFSAFMLDTV, and AFYVAASIGFGVGAVFAGLAV. Na(+)-binding residues include Gly75 and Thr78.

The protein belongs to the fluoride channel Fluc/FEX (TC 1.A.43) family.

Its subcellular location is the cell inner membrane. It catalyses the reaction fluoride(in) = fluoride(out). Its activity is regulated as follows. Na(+) is not transported, but it plays an essential structural role and its presence is essential for fluoride channel function. Fluoride-specific ion channel. Important for reducing fluoride concentration in the cell, thus reducing its toxicity. This chain is Fluoride-specific ion channel FluC, found in Allorhizobium ampelinum (strain ATCC BAA-846 / DSM 112012 / S4) (Agrobacterium vitis (strain S4)).